We begin with the raw amino-acid sequence, 381 residues long: Cytochrome b (381 aa).

4 helical membrane passes run F34–M54, W78–I99, W114–L134, and F179–L199. 2 residues coordinate heme b: H84 and H98. Positions 183 and 197 each coordinate heme b. H202 lines the a ubiquinone pocket. 4 helical membrane-spanning segments follow: residues Y227–M247, L289–H309, M321–G341, and F348–P368.

This sequence belongs to the cytochrome b family. The cytochrome bc1 complex contains 3 respiratory subunits (MT-CYB, CYC1 and UQCRFS1), 2 core proteins (UQCRC1 and UQCRC2) and probably 6 low-molecular weight proteins. It depends on heme b as a cofactor.

It is found in the mitochondrion inner membrane. Functionally, component of the ubiquinol-cytochrome c reductase complex (complex III or cytochrome b-c1 complex) that is part of the mitochondrial respiratory chain. The b-c1 complex mediates electron transfer from ubiquinol to cytochrome c. Contributes to the generation of a proton gradient across the mitochondrial membrane that is then used for ATP synthesis. The sequence is that of Cytochrome b (mt-cyb) from Carcharhinus plumbeus (Sandbar shark).